Reading from the N-terminus, the 92-residue chain is Large ribosomal subunit protein bL25 (92 aa).

The protein belongs to the bacterial ribosomal protein bL25 family. Part of the 50S ribosomal subunit; part of the 5S rRNA/L5/L18/L25 subcomplex. Contacts the 5S rRNA. Binds to the 5S rRNA independently of L5 and L18.

This is one of the proteins that binds to the 5S RNA in the ribosome where it forms part of the central protuberance. The sequence is that of Large ribosomal subunit protein bL25 from Aliivibrio salmonicida (strain LFI1238) (Vibrio salmonicida (strain LFI1238)).